Consider the following 1416-residue polypeptide: MKDLLRFFKIQHTQIEEFNAIKIALASPDMIRSWSFGEVKKPETINYRTFKPERDGLFCARIFGPIKDYECLCGKYKRLKHRGVVCEKCGVEVTQSKVRRERMGHIELASPTAHIWFLKSLPSRIGLLLDMPLRDIERVLYFESYVVVESGMTSLECRQVLTEEEYLDALEEFGDEFEAKMGAEAIQILLRNTNLKNECEYLREILEDSHSETKRKKITKRIKLIEAFIYSENKPEWMVLNVLPVLPPDLRPLVPLDGGRFATSDLNDLYRRVINRNNRLKRLLDLAAPEIIVRNEKRMLQEAVDALLDNGRRGRAITGSNKRPLKSLADMIKGKQGRFRQNLLGKRVDYSGRSVITVGPYLKLHQCGLPKKMALELFKPFIYGKLELQGFASTIKAAKKMVDREEAVVWDILDNVIREHPVMLNRAPTLHRLGIQAFEPVLIEGKAIQLHPLVCAAYNADFDGDQMAVHVPLTLEAQLEARALMMSTNNILSPANGEPIIVPSQDVVLGLYYMTRERSNAKGEGMVLTGPKEAECLYRLGLADLHARIKIRITEYEYDKNGEWSKKTNLVNSTIGRSILWMIVPKGLPFILVNQVLGKKAISTMLNNCYRLLGMKATVILADQIMYTGFAYAARSGASVGIDDMMIPSKKADIIDEAESEVVEIQEQFQTGLVTAGERYNKVIDIWAAANERVAQAMMDNLATETVMNRNGQLENQASFNNIFMMADSGARGSAAQIRQLAGMRGLMAKPDGSIIETPITANFREGLNVLQYFISTHGARKGLADTALKTANSGYLTRRLVDVAQDLVITQDDCDTFSGIVMSPVIEGGDVKEPLRERVLGRVLAEDILESNADTDSKVLIVRNTLLDEYWCDVLDEHSIDTVKVRSVVTCDTDFGVCSKCYGRDLARGQIVNKGEAIGVIAAQSIGEPGTQLTMRTFHIGGAASRSALESSIQIKNTGTVCLKNIKSVINGEGKLVVISRNTELKIIDQFSRTKESYKVPYGAVITKKNEEKVIHGEIVAYWDPHTMPVIAEVSGFIQFIDLIDGQSIVKQTDELTGLTSIVVLDTSERVSSAKDLRPTLKIVDINGYDIFIPGTDVPVQYFLPGRSVVQLVDGSRIICGDILARLPHESSGTKDITGGLPRVADLFEARRPKESAILAEISGTISFGKETKGKRRLMISPIEDGDVYEEMIPKWRHLNVFEGEYVDRGDIISDGPESPHDILRLRGVHAVTRYIVNEVQDVYRLQGVKINDKHIEVIVRQMLRKATVIRSGSSDFLVGEQVEYSRIKIANRKLENEGKVKISFIRNLLGITKASLATESFISAASFQETTRVLTESSVAGKRDELRGLKENVIVGRLIPAGTGYSYHQERVHHRHFSNKKETEKSVITNISSQITADEASANLTELLNATSPK.

4 residues coordinate Zn(2+): cysteine 71, cysteine 73, cysteine 86, and cysteine 89. Residues aspartate 461, aspartate 463, and aspartate 465 each coordinate Mg(2+). Zn(2+) contacts are provided by cysteine 815, cysteine 892, cysteine 899, and cysteine 902.

It belongs to the RNA polymerase beta' chain family. In terms of assembly, the RNAP catalytic core consists of 2 alpha, 1 beta, 1 beta' and 1 omega subunit. When a sigma factor is associated with the core the holoenzyme is formed, which can initiate transcription. Mg(2+) serves as cofactor. The cofactor is Zn(2+).

The enzyme catalyses RNA(n) + a ribonucleoside 5'-triphosphate = RNA(n+1) + diphosphate. DNA-dependent RNA polymerase catalyzes the transcription of DNA into RNA using the four ribonucleoside triphosphates as substrates. This is DNA-directed RNA polymerase subunit beta' from Blochmanniella pennsylvanica (strain BPEN).